Consider the following 91-residue polypeptide: Chorion class B protein M3A5 (91 aa).

The segment at 1–51 (VASENRYEGTVGVSGNLPFLGTADVAGEFPTAGIGEILYGCGNGAVGITRE) is central domain. A right arm (Gly-rich tandem repeats) region spans residues 52–91 (GGLGYGAGYGGGYGLGYGGYGGGYGLGYGGYGGCGCGCGY).

Belongs to the chorion protein family.

Functionally, this protein is one of many from the eggshell of the silk moth. The sequence is that of Chorion class B protein M3A5 from Bombyx mori (Silk moth).